The sequence spans 343 residues: UPF0157 protein YqkA (343 aa).

In terms of domain architecture, N-acetyltransferase spans 8-144 (KEATIAREIL…VKAAQGLLLS (137 aa)). The tract at residues 135–343 (VKAAQGLLLS…ENDENGGFTL (209 aa)) is UPF0157.

The protein in the C-terminal section; belongs to the UPF0157 (GrpB) family.

This chain is UPF0157 protein YqkA (yqkA), found in Bacillus subtilis (strain 168).